A 275-amino-acid chain; its full sequence is Large ribosomal subunit protein uL2 (275 aa).

Positions 220 to 275 (QTRGAAMNPVDHPHGGGEGKTGSSGHPVSPWGMPAKGFKTRKKKASDKLIISRRKK) are disordered. The span at 257–275 (FKTRKKKASDKLIISRRKK) shows a compositional bias: basic residues.

This sequence belongs to the universal ribosomal protein uL2 family. Part of the 50S ribosomal subunit. Forms a bridge to the 30S subunit in the 70S ribosome.

One of the primary rRNA binding proteins. Required for association of the 30S and 50S subunits to form the 70S ribosome, for tRNA binding and peptide bond formation. It has been suggested to have peptidyltransferase activity; this is somewhat controversial. Makes several contacts with the 16S rRNA in the 70S ribosome. This is Large ribosomal subunit protein uL2 from Wolinella succinogenes (strain ATCC 29543 / DSM 1740 / CCUG 13145 / JCM 31913 / LMG 7466 / NCTC 11488 / FDC 602W) (Vibrio succinogenes).